Consider the following 332-residue polypeptide: Adenine deaminase (332 aa).

The Zn(2+) site is built by histidine 16, histidine 18, and histidine 196. Glutamate 199 functions as the Proton donor in the catalytic mechanism. A Zn(2+)-binding site is contributed by aspartate 277. A substrate-binding site is contributed by aspartate 278.

The protein belongs to the metallo-dependent hydrolases superfamily. Adenosine and AMP deaminases family. Adenine deaminase type 2 subfamily. The cofactor is Zn(2+).

The catalysed reaction is adenine + H2O + H(+) = hypoxanthine + NH4(+). Functionally, catalyzes the hydrolytic deamination of adenine to hypoxanthine. Plays an important role in the purine salvage pathway and in nitrogen catabolism. In Acinetobacter baylyi (strain ATCC 33305 / BD413 / ADP1), this protein is Adenine deaminase.